We begin with the raw amino-acid sequence, 419 residues long: Protein distal antenna-related (419 aa).

The region spanning 15–66 (TRGKRPLRNLTPNDKVRAIQRIHNGETKASVSRDIGVPESTLRGWCKNEQKL) is the HTH psq-type domain. Positions 42 to 62 (KASVSRDIGVPESTLRGWCKN) form a DNA-binding region, H-T-H motif. Disordered regions lie at residues 333-359 (QPGGGGPGGPSYNPNQMASGGSEPDLE) and 378-419 (EASN…DAEQ).

Interacts with itself, dan, ey and dac to form a complex (or complexes) containing the RD factors. Coexpressed with dan in the presumptive distal antenna, but not in the leg imaginal disk. Both proteins are also expressed in the brain and the eye region of the eye-antenna disk. First detected in early L3 eye disks in cells surrounding the newly initiated morphogenetic furrow. Highly expressed in evenly spaced clusters of cells anterior to the furrow, lower levels within and posterior to the furrow.

It is found in the nucleus. Its function is as follows. Probable transcription factor with a role in the retinal determination (RD) network. Regulates ato expression and is required for normal R8 induction and differentiation. Danr appears to repress Dan expression, but Dan is required for Danr expression anterior to the morphogenetic furrow (MF). Dan and Danr lie downstream of so and require dac function for highest levels of expression. Contributes to differentiation of antenna-specific characteristics; effector gene that acts downstream of homothorax (hth), Distal-less (Dll), cut (ct) and spineless (ss) genes to control differentiation of distal antennal structures. The chain is Protein distal antenna-related from Drosophila melanogaster (Fruit fly).